A 189-amino-acid polypeptide reads, in one-letter code: Elongation factor P (189 aa).

This sequence belongs to the elongation factor P family.

Its subcellular location is the cytoplasm. It functions in the pathway protein biosynthesis; polypeptide chain elongation. Its function is as follows. Involved in peptide bond synthesis. Stimulates efficient translation and peptide-bond synthesis on native or reconstituted 70S ribosomes in vitro. Probably functions indirectly by altering the affinity of the ribosome for aminoacyl-tRNA, thus increasing their reactivity as acceptors for peptidyl transferase. The chain is Elongation factor P from Sinorhizobium medicae (strain WSM419) (Ensifer medicae).